We begin with the raw amino-acid sequence, 251 residues long: D-aminoacyl-tRNA deacylase (251 aa).

This sequence belongs to the DtdA deacylase family. In terms of assembly, monomer. Requires Zn(2+) as cofactor.

The catalysed reaction is a D-aminoacyl-tRNA + H2O = a tRNA + a D-alpha-amino acid + H(+). It carries out the reaction glycyl-tRNA(Ala) + H2O = tRNA(Ala) + glycine + H(+). In terms of biological role, D-aminoacyl-tRNA deacylase with broad substrate specificity. By recycling D-aminoacyl-tRNA to D-amino acids and free tRNA molecules, this enzyme counteracts the toxicity associated with the formation of D-aminoacyl-tRNA entities in vivo. The protein is D-aminoacyl-tRNA deacylase of Pyrobaculum calidifontis (strain DSM 21063 / JCM 11548 / VA1).